Reading from the N-terminus, the 119-residue chain is Large ribosomal subunit protein bL20 (119 aa).

Belongs to the bacterial ribosomal protein bL20 family. Part of the 50S ribosomal subunit.

Its function is as follows. Binds directly to 23S ribosomal RNA and is necessary for the in vitro assembly process of the 50S ribosomal subunit. It is not involved in the protein synthesizing functions of that subunit. This is Large ribosomal subunit protein bL20 (rplT) from Bacillus subtilis (strain 168).